The following is a 98-amino-acid chain: Putative pterin-4-alpha-carbinolamine dehydratase (98 aa).

Belongs to the pterin-4-alpha-carbinolamine dehydratase family.

The catalysed reaction is (4aS,6R)-4a-hydroxy-L-erythro-5,6,7,8-tetrahydrobiopterin = (6R)-L-erythro-6,7-dihydrobiopterin + H2O. This Jannaschia sp. (strain CCS1) protein is Putative pterin-4-alpha-carbinolamine dehydratase.